Reading from the N-terminus, the 327-residue chain is GTPase Obg (327 aa).

An Obg domain is found at 1-159 (MKFLDQVKIY…YVIWLQLKTI (159 aa)). Positions 160-327 (ADVGIVGLPN…IKAKLLSYVS (168 aa)) constitute an OBG-type G domain. GTP is bound by residues 166–173 (GLPNAGKS), 191–195 (FTTLN), 212–215 (DIPG), 279–282 (NKTD), and 308–310 (STL). Positions 173 and 193 each coordinate Mg(2+).

This sequence belongs to the TRAFAC class OBG-HflX-like GTPase superfamily. OBG GTPase family. As to quaternary structure, monomer. Requires Mg(2+) as cofactor.

The protein resides in the cytoplasm. Functionally, an essential GTPase which binds GTP, GDP and possibly (p)ppGpp with moderate affinity, with high nucleotide exchange rates and a fairly low GTP hydrolysis rate. Plays a role in control of the cell cycle, stress response, ribosome biogenesis and in those bacteria that undergo differentiation, in morphogenesis control. This chain is GTPase Obg, found in Pelagibacter ubique (strain HTCC1062).